The chain runs to 62 residues: UPF0434 protein FTL_1400 (62 aa).

Belongs to the UPF0434 family.

This chain is UPF0434 protein FTL_1400, found in Francisella tularensis subsp. holarctica (strain LVS).